Here is a 1272-residue protein sequence, read N- to C-terminus: Myosin-3 (1272 aa).

The interval 1 to 20 is disordered; that stretch reads MAVIKKGARRKDVKEPKKRS. The region spanning 36–715 is the Myosin motor domain; that stretch reads VGISDLTLLS…SLFALEDMRD (680 aa). 129-136 is a binding site for ATP; sequence GESGAGKT. A Phosphoserine modification is found at S357. The segment at 588–610 is actin-binding; it reads ANELVETLSKAEPSYIRTIKPNQ. IQ domains lie at 719–739 and 740–765; these read YNMAARIQRAWRRFLQRRIDA and AIKIQRTIREKKGGNKYVKLRDYGTK. The 191-residue stretch at 771–961 folds into the TH1 domain; it reads KERRSMSLLG…TIYVRRGHPA (191 aa). Disordered regions lie at residues 951–1015, 1029–1141, and 1217–1272; these read STIY…QKPV, YNPK…SELP, and VQFG…DDDW. Positions 980 to 1000 are enriched in basic residues; the sequence is IKSKKSKHKSTHKHTHSHRSH. The span at 1066–1078 shows a compositional bias: low complexity; the sequence is KKASSSHKSSSAK. The span at 1089-1098 shows a compositional bias: basic and acidic residues; that stretch reads GVEKNKEPLK. Over residues 1109–1118 the composition is skewed to pro residues; it reads PIPPPPPPMG. Residues 1120 to 1182 form the SH3 domain; that stretch reads PKDPKFEAAY…PTAYMTPYKD (63 aa). Polar residues predominate over residues 1217–1236; the sequence is VQFGSATVGPTSDNQSNPVG. A compositionally biased stretch (acidic residues) spans 1258–1272; that stretch reads ADDDDNDDGDDDDDW.

Belongs to the TRAFAC class myosin-kinesin ATPase superfamily. Myosin family. In terms of assembly, interacts (via myosin motor domain) with SHE4; this interaction is important for proper localization and may regulate the interaction of the motor domain with actin. Interacts (via SH3 domain) with VRP1; this interaction is required for localization to sites of polarized growth and may regulate the interaction of the tail domain with actin. Interacts (via SH3 domain) with PAN1; this interaction is important for late stages of endocytopsis. Interacts (via SH3 domain) with BBC1 and LAS17. Interacts (via C-terminal acidic tail) with ARC19 and ARC40; ARC19 and ARC40 are Arp2/3 complex subunits. In terms of processing, phosphorylation of the TEDS site (Ser-357) is required for the polarization of the actin cytoskeleton and for ligand-induced, but not for constitutive internalization of STE2. Phosphorylation probably activates the myosin-I ATPase. Ser-357 is phosphorylated by CLA4 and STE20 in vitro.

The protein localises to the cytoplasm. The protein resides in the cytoskeleton. It is found in the actin patch. Functionally, one of two redundant type-I myosins implicated in the organization of the actin cytoskeleton. Required for proper actin cytoskeleton polarization and for the internalization step in endocytosis. At the cell cortex, assembles in patch-like structures together with proteins from the actin-polymerizing machinery and promotes actin assembly. Functions redundantly with LAS17 as actin nucleation-promoting factor (NPF) for the Arp2/3 complex. Motor domain phosphorylation by PAK kinases CLA4 and STE20 promotes CDC42-regulated actin assembly. Functions together with the NPF PAN1 in late stages of endocytosis. Motor domain phosphorylation by PDK1 kinases PKH1 and PKH2, and by SGK kinases YPK1 and YPK2, promotes ligand-induced, but not constitutive endocytosis of the G protein-coupled receptor STE2. The chain is Myosin-3 (MYO3) from Saccharomyces cerevisiae (strain ATCC 204508 / S288c) (Baker's yeast).